Here is a 2156-residue protein sequence, read N- to C-terminus: MSDTPSTGFSIIHPTSSEGQVPPPRHLSLTHPVVAKRISFYKSGDPQFGGVRVVVNPRSFKSFDALLDNLSRKVPLPFGVRNISTPRGRHSITRLEELEDGESYLCSHGRKVQPVDLDKARRRPRPWLSSRAISAHSPPHPVAVAAPGMPRPPRSLVVFRNGDPKTRRAVLLSRRVTQSFEAFLQHLTEVMQRPVVKLYATDGRRVPSLQAVILSSGAVVAAGREPFKPGNYDIQKYLLPARLPGISQRVYPKGNAKSESRKISTHMSSSSRSQIYSVSSEKTHNNDCYLDYSFVPEKYLALEKNDSQNLPIYPSEDDIEKSIIFNQDGTMTVEMKVRFRIKEEETIKWTTTVSKTGPSNNDEKSEMSFPGRTESRSSGLKLAACSFSADVSPMERSSNQEGSLAEEINIQMTDQVAETCSSASWENATVDTDIIQGTQDQAKHRFYRPPTPGLRRVRQKKSVIGSVTLVSETEVQEKMIGQFSYSEERESGENKSEYHMFTHSCSKMSSVSNKPVLVQINNNDQMEESSLERKKENSLLKSSAISAGVIEITSQKMLEMSHNNGLPSTISNNSIVEEDVVDCVVLDNKTGIKNFKTYGNTNDRFSPISADATHFSSNNSGTDKNISEAPASEASSTVTARIDRLINEFAQCGLTKLPKNEKKILSSVASKKKKKSRQQAINSRYQDGQLATKGILNKNERINTKGRITKEMIVQDSDSPLKGGILCEEDLQKSDTVIESNTFCSKSNLNSTISKNFHRNKLNTTQNSKVQGLLTKRKSRSLNKISLGAPKKREIGQRDKVFPHNESKYCKSTFENKSLFHVFNILEQKPKDFYAPQSQAEVASGYLRGMAKKSLVSKVTDSHITLKSQKKRKGDKVKASAILSKQHATTRANSLASLKKPDFPEAIAHHSIQNYIQSWLQNINPYPTLKPIKSAPVCRNETSVVNCSNNSFSGNDPHTNSGKISNFVMESNKHITKIAGLTGDNLCKEGDKSFIANDTGEEDLHETQVGSLNDAYLVPLHEHCTLSQSAINDHNTKSHIAAEKSGPEKKLVYQEINLARKRQSVEAAIQVDPIEEETPKDLLPVLMLHQLQASVPGIHKTQNGVVQMPGSLAGVPFHSAICNSSTNLLLAWLLVLNLKGSMNSFCQVDAHKATNKSSETLALLEILKHIAITEEADDLKAAVANLVESTTSHFGLSEKEQDMVPIDLSANCSTVNIQSVPKCSENERTQGISSLDGGCSASEACAPEVCVLEVTCSPCEMCTVNKAYSPKETCNPSDTFFPSDGYGVDQTSMNKACFLGEVCSLTDTVFSDKACAQKENHTYEGACPIDETYVPVNVCNTIDFLNSKENTYTDNLDSTEELERGDDIQKDLNILTDPEYKNGFNTLVSHQNVSNLSSCGLCLSEKEAELDKKHSSLDDFENCSLRKFQDENAYTSFDMEEPRTSEEPGSITNSMTSSERNISELESFEELENHDTDIFNTVVNGGEQATEELIQEEVEASKTLELIDISSKNIMEEKRMNGIIYEIISKRLATPPSLDFCYDSKQNSEKETNEGETKMVKMMVKTMETGSYSESSPDLKKCIKSPVTSDWSDYRPDSDSEQPYKTSSDDPNDSGELTQEKEYNIGFVKRAIEKLYGKADIIKPSFFPGSTRKSQVCPYNSVEFQCSRKASLYDSEGQSFGSSEQVSSSSSMLQEFQEERQDKCDVSAVRDNYCRGDIVEPGTKQNDDSRILTDIEEGVLIDKGKWLLKENHLLRMSSENPGMCGNADTTSVDTLLDNNSSEVPYSHFGNLAPGPTMDELSSSELEELTQPLELKCNYFNMPHGSDSEPFHEDLLDVRNETCAKERIANHHTEEKGSHQSERVCTSVTHSFISAGNKVYPVSDDAIKNQPLPGSNMIHGTLQEADSLDKLYALCGQHCPILTVIIQPMNEEDRGFAYRKESDIENFLGFYLWMKIHPYLLQTDKNVFREENNKASMRQNLIDNAIGDIFDQFYFSNTFDLMGKRRKQKRINFLGLEEEGNLKKFQPDLKERFCMNFLHTSLLVVGNVDSNTQDLSGQTNEIFKAVDENNNLLNNRFQGSRTNLNQVVRENINCHYFFEMLGQACLLDICQVETSLNISNRNILELCMFEGENLFIWEEEDILNLTDLESSREQEDL.

Positions M1–G19 are enriched in polar residues. Residues M1–R25 form a disordered region. Doublecortin domains are found at residues K36 to D118 and R154 to D233. Disordered stretches follow at residues V353–S375, S666–Q686, D1438–S1458, and D1590–K1621.

Interacts (via the doublecortin domains) with microtubules. Interacts with RP1L1. Interacts with MAK. Expressed in retina. Not expressed in heart, brain, placenta, lung, liver, skeletal muscle, kidney, spleen and pancreas.

The protein resides in the cytoplasm. The protein localises to the cytoskeleton. Its subcellular location is the cilium axoneme. It localises to the cell projection. It is found in the cilium. The protein resides in the photoreceptor outer segment. Functionally, microtubule-associated protein regulating the stability and length of the microtubule-based axoneme of photoreceptors. Required for the differentiation of photoreceptor cells, it plays a role in the organization of the outer segment of rod and cone photoreceptors ensuring the correct orientation and higher-order stacking of outer segment disks along the photoreceptor axoneme. The sequence is that of Oxygen-regulated protein 1 (RP1) from Homo sapiens (Human).